A 357-amino-acid chain; its full sequence is Naringenin,2-oxoglutarate 3-dioxygenase (357 aa).

Residues 189–293 form the Fe2OG dioxygenase domain; it reads CVDMDQKIVV…RLSIATFQNP (105 aa). Fe cation contacts are provided by histidine 216, aspartate 218, and histidine 274. A 2-oxoglutarate-binding site is contributed by arginine 284.

It belongs to the iron/ascorbate-dependent oxidoreductase family. Fe(2+) serves as cofactor. Requires L-ascorbate as cofactor.

It carries out the reaction a (2S)-flavan-4-one + 2-oxoglutarate + O2 = a (2R,3R)-dihydroflavonol + succinate + CO2. Its pathway is secondary metabolite biosynthesis; flavonoid biosynthesis. Functionally, catalyzes the 3-beta-hydroxylation of 2S-flavanones to 2R,3R-dihydroflavonols which are intermediates in the biosynthesis of flavonols, anthocyanidins, catechins and proanthocyanidins in plants. The sequence is that of Naringenin,2-oxoglutarate 3-dioxygenase (FHT) from Matthiola incana (Common stock).